Reading from the N-terminus, the 167-residue chain is Regulatory protein RecX (167 aa).

A disordered region spans residues 19–49; that stretch reads ESELRRKLASQPFSAKGHWGKQTGRSDNEPV.

The protein belongs to the RecX family.

The protein resides in the cytoplasm. In terms of biological role, modulates RecA activity. This chain is Regulatory protein RecX, found in Yersinia enterocolitica serotype O:8 / biotype 1B (strain NCTC 13174 / 8081).